Here is a 601-residue protein sequence, read N- to C-terminus: Terpenoid synthase 17 (601 aa).

Residues asparagine 354, aspartate 358, asparagine 497, threonine 501, and glutamate 505 each coordinate Mg(2+). A DDXXD motif; degenerate motif is present at residues 354–358 (NDTCD).

The protein belongs to the terpene synthase family. Tpsa subfamily. Mg(2+) serves as cofactor. It depends on Mn(2+) as a cofactor. As to expression, expressed exclusively in flowers.

It is found in the cytoplasm. Its pathway is secondary metabolite biosynthesis; terpenoid biosynthesis. The protein is Terpenoid synthase 17 (TPS17) of Arabidopsis thaliana (Mouse-ear cress).